Reading from the N-terminus, the 284-residue chain is L-ribulose-5-phosphate 3-epimerase UlaE (284 aa).

It belongs to the L-ribulose-5-phosphate 3-epimerase family.

The catalysed reaction is L-ribulose 5-phosphate = L-xylulose 5-phosphate. The protein operates within cofactor degradation; L-ascorbate degradation; D-xylulose 5-phosphate from L-ascorbate: step 3/4. Functionally, catalyzes the isomerization of L-xylulose-5-phosphate to L-ribulose-5-phosphate. Is involved in the anaerobic L-ascorbate utilization. This is L-ribulose-5-phosphate 3-epimerase UlaE from Escherichia coli (strain ATCC 8739 / DSM 1576 / NBRC 3972 / NCIMB 8545 / WDCM 00012 / Crooks).